The chain runs to 559 residues: Formate--tetrahydrofolate ligase (559 aa).

68–75 (TPAGEGKT) serves as a coordination point for ATP.

This sequence belongs to the formate--tetrahydrofolate ligase family.

It catalyses the reaction (6S)-5,6,7,8-tetrahydrofolate + formate + ATP = (6R)-10-formyltetrahydrofolate + ADP + phosphate. It functions in the pathway one-carbon metabolism; tetrahydrofolate interconversion. In Rhizobium rhizogenes (strain K84 / ATCC BAA-868) (Agrobacterium radiobacter), this protein is Formate--tetrahydrofolate ligase.